The chain runs to 177 residues: Large ribosomal subunit protein uL10 (177 aa).

It belongs to the universal ribosomal protein uL10 family. In terms of assembly, part of the ribosomal stalk of the 50S ribosomal subunit. The N-terminus interacts with L11 and the large rRNA to form the base of the stalk. The C-terminus forms an elongated spine to which L12 dimers bind in a sequential fashion forming a multimeric L10(L12)X complex.

Forms part of the ribosomal stalk, playing a central role in the interaction of the ribosome with GTP-bound translation factors. This Variovorax paradoxus (strain S110) protein is Large ribosomal subunit protein uL10.